We begin with the raw amino-acid sequence, 147 residues long: 3-hydroxyacyl-[acyl-carrier-protein] dehydratase FabZ (147 aa).

His-50 is a catalytic residue.

Belongs to the thioester dehydratase family. FabZ subfamily.

Its subcellular location is the cytoplasm. It carries out the reaction a (3R)-hydroxyacyl-[ACP] = a (2E)-enoyl-[ACP] + H2O. Functionally, involved in unsaturated fatty acids biosynthesis. Catalyzes the dehydration of short chain beta-hydroxyacyl-ACPs and long chain saturated and unsaturated beta-hydroxyacyl-ACPs. The chain is 3-hydroxyacyl-[acyl-carrier-protein] dehydratase FabZ from Lactiplantibacillus plantarum (strain ATCC BAA-793 / NCIMB 8826 / WCFS1) (Lactobacillus plantarum).